The primary structure comprises 336 residues: Ornithine carbamoyltransferase, catabolic (336 aa).

Carbamoyl phosphate-binding positions include 57–60 (STRT), Gln84, Arg108, and 135–138 (HPTQ). Residues Asn168, Asp232, and 236-237 (SM) each bind L-ornithine. Carbamoyl phosphate is bound by residues 274–275 (CL) and Arg321.

It belongs to the aspartate/ornithine carbamoyltransferase superfamily. OTCase family.

The protein resides in the cytoplasm. It carries out the reaction carbamoyl phosphate + L-ornithine = L-citrulline + phosphate + H(+). It participates in amino-acid degradation; L-arginine degradation via ADI pathway; carbamoyl phosphate from L-arginine: step 2/2. Functionally, reversibly catalyzes the transfer of the carbamoyl group from carbamoyl phosphate (CP) to the N(epsilon) atom of ornithine (ORN) to produce L-citrulline. This Burkholderia pseudomallei (strain K96243) protein is Ornithine carbamoyltransferase, catabolic.